The chain runs to 172 residues: Large ribosomal subunit protein uL10 (172 aa).

This sequence belongs to the universal ribosomal protein uL10 family. Part of the ribosomal stalk of the 50S ribosomal subunit. The N-terminus interacts with L11 and the large rRNA to form the base of the stalk. The C-terminus forms an elongated spine to which L12 dimers bind in a sequential fashion forming a multimeric L10(L12)X complex.

Its function is as follows. Forms part of the ribosomal stalk, playing a central role in the interaction of the ribosome with GTP-bound translation factors. In Methylorubrum populi (strain ATCC BAA-705 / NCIMB 13946 / BJ001) (Methylobacterium populi), this protein is Large ribosomal subunit protein uL10.